Here is a 303-residue protein sequence, read N- to C-terminus: Thyrotroph embryonic factor (303 aa).

Disordered regions lie at residues 1-63 and 132-176; these read MSDA…KLEE and ESAS…DPNC. A Phosphoserine modification is found at S32. A compositionally biased stretch (basic and acidic residues) spans 41 to 61; it reads KLMENPPREARLDKEKGKEKL. Residues 133-160 are compositionally biased toward low complexity; it reads SASSSTASPPSSSTAIFQPSETVSSTES. A bZIP domain is found at 233-296; it reads DEKYWTRRKK…GKCKTIVSKY (64 aa). The tract at residues 235 to 255 is basic motif; that stretch reads KYWTRRKKNNVAAKRSRDARR. The interval 256-263 is leucine-zipper; it reads LKENQITI.

The protein belongs to the bZIP family. PAR subfamily. In terms of assembly, binds DNA as a homodimer or a heterodimer. Can form a heterodimer with DBP.

The protein resides in the nucleus. Transcription factor that binds to and transactivates the TSHB promoter. Binds to a minimal DNA-binding sequence 5'-[TC][AG][AG]TTA[TC][AG]-3'. The polypeptide is Thyrotroph embryonic factor (TEF) (Homo sapiens (Human)).